A 374-amino-acid chain; its full sequence is Pectate lyase 1 (374 aa).

The N-terminal stretch at 1–22 (MKYLLPSAAAGLLLLAAQPTMA) is a signal peptide. A disulfide bridge links Cys-93 with Cys-176. Ca(2+) contacts are provided by Asp-150, Asp-152, Glu-187, and Asp-191. Arg-239 is an active-site residue. Cys-350 and Cys-373 are disulfide-bonded.

This sequence belongs to the polysaccharide lyase 1 family. PLADES subfamily. Ca(2+) is required as a cofactor.

It localises to the secreted. The enzyme catalyses Eliminative cleavage of (1-&gt;4)-alpha-D-galacturonan to give oligosaccharides with 4-deoxy-alpha-D-galact-4-enuronosyl groups at their non-reducing ends.. The protein operates within glycan metabolism; pectin degradation; 2-dehydro-3-deoxy-D-gluconate from pectin: step 2/5. Its function is as follows. Involved in maceration and soft-rotting of plant tissue. The protein is Pectate lyase 1 (pel1) of Pectobacterium atrosepticum (strain SCRI 1043 / ATCC BAA-672) (Erwinia carotovora subsp. atroseptica).